The following is a 174-amino-acid chain: Transcriptional repressor NrdR (174 aa).

A zinc finger spans residues 3 to 34; sequence CPICHFPETDVIDTRKLYEGEVIRRRRKCRAC. In terms of domain architecture, ATP-cone spans 49–139; it reads LMVVKKDGTR…VYRSFADIGK (91 aa). Residues 151–174 are disordered; it reads EGTRNGHSSAATTDQGTTDNHSRM. Polar residues predominate over residues 155-174; that stretch reads NGHSSAATTDQGTTDNHSRM.

This sequence belongs to the NrdR family. It depends on Zn(2+) as a cofactor.

Its function is as follows. Negatively regulates transcription of bacterial ribonucleotide reductase nrd genes and operons by binding to NrdR-boxes. The sequence is that of Transcriptional repressor NrdR from Chloroflexus aggregans (strain MD-66 / DSM 9485).